The following is a 132-amino-acid chain: UPF0299 membrane protein YohJ (132 aa).

The next 4 membrane-spanning stretches (helical) occupy residues 7–27, 31–51, 63–83, and 93–113; these read IIWQYIRAFVLIYACLYAGIF, LLPITIPGSIIGMLILFVLLA, GCYVLIRYMALLFVPIGVGVM, and FGPVVVSCAISTLVVFVVVSW.

This sequence belongs to the UPF0299 family.

The protein localises to the cell inner membrane. The polypeptide is UPF0299 membrane protein YohJ (Salmonella arizonae (strain ATCC BAA-731 / CDC346-86 / RSK2980)).